A 189-amino-acid chain; its full sequence is Interferon alpha-10 (189 aa).

The N-terminal stretch at 1–23 (MALSFSLLMAVLVLSYKSICSLG) is a signal peptide. 2 cysteine pairs are disulfide-bonded: Cys24–Cys122 and Cys52–Cys162.

This sequence belongs to the alpha/beta interferon family.

It localises to the secreted. Its function is as follows. Produced by macrophages, IFN-alpha have antiviral activities. Interferon stimulates the production of two enzymes: a protein kinase and an oligoadenylate synthetase. The chain is Interferon alpha-10 (IFNA10) from Homo sapiens (Human).